Consider the following 364-residue polypeptide: Mannonate dehydratase (364 aa).

Belongs to the mannonate dehydratase family. Fe(2+) serves as cofactor. The cofactor is Mn(2+).

The catalysed reaction is D-mannonate = 2-dehydro-3-deoxy-D-gluconate + H2O. It participates in carbohydrate metabolism; pentose and glucuronate interconversion. Functionally, catalyzes the dehydration of D-mannonate. This is Mannonate dehydratase from Streptococcus equi subsp. zooepidemicus (strain MGCS10565).